An 829-amino-acid chain; its full sequence is Leucine--tRNA ligase (829 aa).

Residues 40-50 carry the 'HIGH' region motif; that stretch reads PYPSGNIHMGH. The 'KMSKS' region motif lies at 594–598; that stretch reads KMSKS. ATP is bound at residue Lys-597.

Belongs to the class-I aminoacyl-tRNA synthetase family.

It localises to the cytoplasm. It catalyses the reaction tRNA(Leu) + L-leucine + ATP = L-leucyl-tRNA(Leu) + AMP + diphosphate. The protein is Leucine--tRNA ligase of Anaplasma marginale (strain St. Maries).